A 367-amino-acid chain; its full sequence is tRNA-specific 2-thiouridylase MnmA (367 aa).

ATP is bound by residues 11 to 18 (GLSGGVDS) and L37. The active-site Nucleophile is the C99. Residues C99 and C195 are joined by a disulfide bond. G123 lines the ATP pocket. The tract at residues 145–147 (KDQ) is interaction with tRNA. C195 acts as the Cysteine persulfide intermediate in catalysis. Positions 304 to 305 (RY) are interaction with tRNA.

The protein belongs to the MnmA/TRMU family.

The protein localises to the cytoplasm. It catalyses the reaction S-sulfanyl-L-cysteinyl-[protein] + uridine(34) in tRNA + AH2 + ATP = 2-thiouridine(34) in tRNA + L-cysteinyl-[protein] + A + AMP + diphosphate + H(+). In terms of biological role, catalyzes the 2-thiolation of uridine at the wobble position (U34) of tRNA, leading to the formation of s(2)U34. The polypeptide is tRNA-specific 2-thiouridylase MnmA (Chlorobium luteolum (strain DSM 273 / BCRC 81028 / 2530) (Pelodictyon luteolum)).